Consider the following 210-residue polypeptide: FMN-dependent NADH:quinone oxidoreductase 8 (210 aa).

Residues Ser-10 and 16 to 18 contribute to the FMN site; that span reads SIS.

It belongs to the azoreductase type 1 family. Homodimer. FMN serves as cofactor.

It catalyses the reaction 2 a quinone + NADH + H(+) = 2 a 1,4-benzosemiquinone + NAD(+). The catalysed reaction is N,N-dimethyl-1,4-phenylenediamine + anthranilate + 2 NAD(+) = 2-(4-dimethylaminophenyl)diazenylbenzoate + 2 NADH + 2 H(+). Quinone reductase that provides resistance to thiol-specific stress caused by electrophilic quinones. In terms of biological role, also exhibits azoreductase activity. Catalyzes the reductive cleavage of the azo bond in aromatic azo compounds to the corresponding amines. This Burkholderia lata (strain ATCC 17760 / DSM 23089 / LMG 22485 / NCIMB 9086 / R18194 / 383) protein is FMN-dependent NADH:quinone oxidoreductase 8.